A 297-amino-acid chain; its full sequence is Phosphatidylinositol N-acetylglucosaminyltransferase subunit C (297 aa).

The next 4 helical transmembrane spans lie at 67 to 87 (VFVV…WLFG), 88 to 108 (TGLA…GGDG), 153 to 173 (AVFM…AAIV), and 239 to 259 (AFGG…LLLF).

This sequence belongs to the PIGC family. Component of the glycosylphosphatidylinositol-N-acetylglucosaminyltransferase (GPI-GnT) complex composed at least by PIGA, PIGC, PIGH, PIGP, PIGQ, PIGY and DPM2. Interacts with PIGQ. Interacts with the heterodimer PIGA:PIGH.

It is found in the endoplasmic reticulum membrane. Its pathway is glycolipid biosynthesis; glycosylphosphatidylinositol-anchor biosynthesis. Part of the glycosylphosphatidylinositol-N-acetylglucosaminyltransferase (GPI-GnT) complex that catalyzes the transfer of N-acetylglucosamine from UDP-N-acetylglucosamine to phosphatidylinositol and participates in the first step of GPI biosynthesis. The chain is Phosphatidylinositol N-acetylglucosaminyltransferase subunit C from Mus musculus (Mouse).